The primary structure comprises 241 residues: Uracil-DNA glycosylase (241 aa).

The active-site Proton acceptor is the Asp68.

It belongs to the uracil-DNA glycosylase (UDG) superfamily. UNG family.

Its subcellular location is the cytoplasm. The catalysed reaction is Hydrolyzes single-stranded DNA or mismatched double-stranded DNA and polynucleotides, releasing free uracil.. Functionally, excises uracil residues from the DNA which can arise as a result of misincorporation of dUMP residues by DNA polymerase or due to deamination of cytosine. The sequence is that of Uracil-DNA glycosylase from Sinorhizobium medicae (strain WSM419) (Ensifer medicae).